The sequence spans 329 residues: uncharacterized protein (329 aa).

A coiled-coil region spans residues 56 to 247 (LNKEEQFQED…EAEKTHQAKL (192 aa)).

This is an uncharacterized protein from Bos taurus (Bovine).